The sequence spans 170 residues: Ribosome maturation factor RimM (170 aa).

Residues Pro-98–Phe-170 form the PRC barrel domain.

Belongs to the RimM family. In terms of assembly, binds ribosomal protein uS19.

It localises to the cytoplasm. Functionally, an accessory protein needed during the final step in the assembly of 30S ribosomal subunit, possibly for assembly of the head region. Essential for efficient processing of 16S rRNA. May be needed both before and after RbfA during the maturation of 16S rRNA. It has affinity for free ribosomal 30S subunits but not for 70S ribosomes. The sequence is that of Ribosome maturation factor RimM from Xylella fastidiosa (strain 9a5c).